Here is a 255-residue protein sequence, read N- to C-terminus: 4-hydroxy-tetrahydrodipicolinate reductase (255 aa).

NAD(+) contacts are provided by residues 9–14 (GFKGRM), 89–91 (GTT), and 115–118 (APNF). Residue His145 is the Proton donor/acceptor of the active site. His146 contacts (S)-2,3,4,5-tetrahydrodipicolinate. Lys149 functions as the Proton donor in the catalytic mechanism. A (S)-2,3,4,5-tetrahydrodipicolinate-binding site is contributed by 155–156 (GT).

It belongs to the DapB family.

Its subcellular location is the cytoplasm. It carries out the reaction (S)-2,3,4,5-tetrahydrodipicolinate + NAD(+) + H2O = (2S,4S)-4-hydroxy-2,3,4,5-tetrahydrodipicolinate + NADH + H(+). The enzyme catalyses (S)-2,3,4,5-tetrahydrodipicolinate + NADP(+) + H2O = (2S,4S)-4-hydroxy-2,3,4,5-tetrahydrodipicolinate + NADPH + H(+). Its pathway is amino-acid biosynthesis; L-lysine biosynthesis via DAP pathway; (S)-tetrahydrodipicolinate from L-aspartate: step 4/4. Catalyzes the conversion of 4-hydroxy-tetrahydrodipicolinate (HTPA) to tetrahydrodipicolinate. This chain is 4-hydroxy-tetrahydrodipicolinate reductase, found in Streptococcus mutans serotype c (strain ATCC 700610 / UA159).